Here is a 251-residue protein sequence, read N- to C-terminus: MASLQHTTASLHSKHIPKTTNILTRKPILNLSSSTFYSPKLKLKLKLPLTKTRRSTGGALGARMSSLAAGSYAAALADLANSNNTLDAITADFDKIEQLFSDPKVFDYFSSPIVEDSTKRQLIGEFATTSGFQPHTHNFLNVLIDSKRIDMIIDIIKEFEFVYNTLTDTELVVVTSVVKLESHHLAQIAKQVQKLTGAKKVRTKTLLDPSLVAGFTVRYGNTGSKFIDMSVKRKLEEIAAQIDLGDIQLAV.

The transit peptide at 1–64 directs the protein to the chloroplast; it reads MASLQHTTAS…STGGALGARM (64 aa).

This sequence belongs to the ATPase delta chain family. F-type ATPases have 2 components, CF(1) - the catalytic core - and CF(0) - the membrane proton channel. CF(1) has five subunits: alpha(3), beta(3), gamma(1), delta(1), epsilon(1). CF(0) has three main subunits: a, b and c.

It localises to the plastid. The protein resides in the chloroplast thylakoid membrane. Its function is as follows. This protein seems to be part of the stalk that links CF(0) to CF(1). It either transmits conformational changes from CF(0) into CF(1) or is implicated in proton conduction. The chain is ATP synthase delta chain, chloroplastic (ATPD) from Pisum sativum (Garden pea).